A 701-amino-acid chain; its full sequence is Glycine--tRNA ligase beta subunit (701 aa).

Belongs to the class-II aminoacyl-tRNA synthetase family. As to quaternary structure, tetramer of two alpha and two beta subunits.

The protein resides in the cytoplasm. It catalyses the reaction tRNA(Gly) + glycine + ATP = glycyl-tRNA(Gly) + AMP + diphosphate. The sequence is that of Glycine--tRNA ligase beta subunit from Helicobacter pylori (strain G27).